Consider the following 608-residue polypeptide: MNTPSSKTPLSHIRNFSIVAHIDHGKSTLADRLIQSTGGLAEREMSEQVLDSMDIERERGITIKAQTVRLHYKANDGETYVLNLIDTPGHVDFAYEVSRSLSACEGSLLVVDASQGVEAQTLANVYQAIDNNHELVTVLNKIDLPAAEPERIKEQIEEVIGIDASDAVLISAKTGLGIPDVLEAIVHKLPAPKSEGGDTAPLKALLVDSWYDAYLGVMVLVRVIDGTLKKGMTIRMMGTDAKYQVERVGVLTPKMVAMEALGPGEIGFITASIKEVADTRVGDTITEDKRPTAKALPGFKPAQPVVFCGLFPVDAADFEDLRSAMGKLRLNDASFSFEMESSAALGFGFRCGFLGLLHLEIIQERLEREFDLDLIATAPSVVYKLFMTDGSERELHNPADMPDVVKIAEIHEPWIRATILTPDEYLGGILKLCQDRRGIQIELTYVGTRAMLTYDLPLNEVVFDFYDRLKSISKGYASFDYQITEHKEGNLVKMSILVNGEPVDALSMMVHRMAAEKRGREMCEKLKELIPKHMFKIPIQAAIGGNVIARETISALRKDVTAKCYGGDATRKRKLLEKQKAGKKRMRQFGKVEIPQEAFIAALKMSDE.

A tr-type G domain is found at 11-193 (SHIRNFSIVA…AIVHKLPAPK (183 aa)). Residues 23–28 (DHGKST) and 140–143 (NKID) each bind GTP.

The protein belongs to the TRAFAC class translation factor GTPase superfamily. Classic translation factor GTPase family. LepA subfamily.

It is found in the cell inner membrane. The enzyme catalyses GTP + H2O = GDP + phosphate + H(+). Required for accurate and efficient protein synthesis under certain stress conditions. May act as a fidelity factor of the translation reaction, by catalyzing a one-codon backward translocation of tRNAs on improperly translocated ribosomes. Back-translocation proceeds from a post-translocation (POST) complex to a pre-translocation (PRE) complex, thus giving elongation factor G a second chance to translocate the tRNAs correctly. Binds to ribosomes in a GTP-dependent manner. This is Elongation factor 4 from Rhizobium meliloti (strain 1021) (Ensifer meliloti).